The primary structure comprises 55 residues: Large ribosomal subunit protein bL33 (55 aa).

This sequence belongs to the bacterial ribosomal protein bL33 family.

In Edwardsiella ictaluri (strain 93-146), this protein is Large ribosomal subunit protein bL33.